A 215-amino-acid polypeptide reads, in one-letter code: MKLVEKTTTTEQDNGEDFCRTIIEVSEVNRNVFQAPGGEADPFRVVSGEELHLIPPLNFSMVDNGIFRSGFPDSANFSFLQTLGLRSIIYLCPEPYPESNLQFLKSNGIRLFQFGIEGNKEPFVNIPDHKIRMALKVLLDEKNHPVLIHCKRGKHRTGCLVGCLRKLQKWCLTSIFDEYQRFAAAKARVSDQRFMEIFDVSSFSHIPMSFSCSIR.

The Tyrosine-protein phosphatase domain occupies 58 to 209 (NFSMVDNGIF…VSSFSHIPMS (152 aa)). The interval 114–126 (FGIEGNKEPFVNI) is WPD loop important for active site topology. 1D-myo-inositol hexakisphosphate-binding residues include asparagine 125, isoleucine 126, histidine 129, and lysine 130. The active-site Phosphocysteine intermediate is cysteine 150.

Belongs to the protein-tyrosine phosphatase family. Atypical dual-specificity phosphatase Siw14-like subfamily. As to quaternary structure, homodimer and homohexamer; behaves as a monomer in solution. In terms of tissue distribution, highly expressed in siliques and at lower levels in roots, leaves and flowers.

It catalyses the reaction 5-diphospho-1D-myo-inositol 1,2,3,4,6-pentakisphosphate + H2O = 1D-myo-inositol hexakisphosphate + phosphate + H(+). The catalysed reaction is 1,5-bis(diphospho)-1D-myo-inositol 2,3,4,6-tetrakisphosphate + H2O = 1-diphospho-1D-myo-inositol 2,3,4,5,6-pentakisphosphate + phosphate + 2 H(+). The enzyme catalyses 3,5-bis(diphospho)-1D-myo-inositol 1,2,4,6-tetrakisphosphate + H2O = 3-diphospho-1D-myo-inositol 1,2,4,5,6-pentakisphosphate + phosphate + 2 H(+). It carries out the reaction 6-diphospho-1D-myo-inositol pentakisphosphate + H2O = 1D-myo-inositol hexakisphosphate + phosphate + H(+). It catalyses the reaction 5-diphospho-1D-myo-inositol 1,3,4,6-tetrakisphosphate + H2O = 1D-myo-inositol 1,3,4,5,6-pentakisphosphate + phosphate + H(+). Inhibited by manganese, calcium and zinc ions but not magnesium ions. In terms of biological role, cleaves the beta-phosphate at the 5-position of soluble inositol pyrophosphates. Has highest activity on 5-diphosphoinositol 1,2,3,4,6-pentakisphosphate (5-InsP(7)), 1,5-bis-diphosphoinositol 2,3,4,6-tetrakisphosphate (1,5-InsP(8)) and 3,5-InsP(8), but has weak activity against 1-diphosphoinositol 2,3,4,5,6-pentakisphosphate (1-InsP(7)). Dephosphorylates the phosphoinositides PI(3,4,5)P3, PI(3,5)P2, but not PI(3)P, PI(3,4)P2 or PI(4,5)P2. Possesses phosphotyrosine phosphatase activity in vitro, and can hydrolyze para-nitrophenyl phosphate, O-methylfluorescein phosphate, polyphosphate and ATP. The sequence is that of Inositol diphosphatase DSP1 from Arabidopsis thaliana (Mouse-ear cress).